A 367-amino-acid polypeptide reads, in one-letter code: uncharacterized protein (367 aa).

The protein belongs to the Gfo/Idh/MocA family.

This is an uncharacterized protein from Streptococcus pneumoniae serotype 4 (strain ATCC BAA-334 / TIGR4).